The chain runs to 118 residues: Beta-2-microglobulin (118 aa).

A signal peptide spans 1 to 20 (MAVSAALVLLGLLSLSGLDA). Positions 25 to 112 (PEVQVYSRHP…HVTLTQPKIV (88 aa)) constitute an Ig-like C1-type domain. An intrachain disulfide couples Cys45 to Cys99.

The protein belongs to the beta-2-microglobulin family. Heterodimer of an alpha chain and a beta chain. Beta-2-microglobulin is the beta-chain of major histocompatibility complex class I molecules.

Its subcellular location is the secreted. In terms of biological role, component of the class I major histocompatibility complex (MHC). Involved in the presentation of peptide antigens to the immune system. The polypeptide is Beta-2-microglobulin (B2M) (Ovis aries (Sheep)).